The following is a 190-amino-acid chain: Elongation factor P 2 (190 aa).

Belongs to the elongation factor P family.

It is found in the cytoplasm. It participates in protein biosynthesis; polypeptide chain elongation. Its function is as follows. Involved in peptide bond synthesis. Stimulates efficient translation and peptide-bond synthesis on native or reconstituted 70S ribosomes in vitro. Probably functions indirectly by altering the affinity of the ribosome for aminoacyl-tRNA, thus increasing their reactivity as acceptors for peptidyl transferase. The chain is Elongation factor P 2 (efp2) from Chlamydia caviae (strain ATCC VR-813 / DSM 19441 / 03DC25 / GPIC) (Chlamydophila caviae).